The sequence spans 346 residues: Protein RecA (346 aa).

An ATP-binding site is contributed by 66–73 (GPESSGKT).

It belongs to the RecA family.

Its subcellular location is the cytoplasm. In terms of biological role, can catalyze the hydrolysis of ATP in the presence of single-stranded DNA, the ATP-dependent uptake of single-stranded DNA by duplex DNA, and the ATP-dependent hybridization of homologous single-stranded DNAs. It interacts with LexA causing its activation and leading to its autocatalytic cleavage. The chain is Protein RecA from Aromatoleum aromaticum (strain DSM 19018 / LMG 30748 / EbN1) (Azoarcus sp. (strain EbN1)).